Here is a 434-residue protein sequence, read N- to C-terminus: Ribosomal protein uS12 methylthiotransferase RimO (434 aa).

The MTTase N-terminal domain occupies 2 to 112 (AKIGFVSLGC…VLEAVQEVLP (111 aa)). Cysteine 11, cysteine 47, cysteine 76, cysteine 142, cysteine 146, and cysteine 149 together coordinate [4Fe-4S] cluster. In terms of domain architecture, Radical SAM core spans 128–365 (LTPRHYAYVK…LEVQARVSLR (238 aa)). The TRAM domain occupies 368–434 (QRFVGKTLEV…DTYDLHGVQA (67 aa)).

This sequence belongs to the methylthiotransferase family. RimO subfamily. [4Fe-4S] cluster is required as a cofactor.

The protein resides in the cytoplasm. It catalyses the reaction L-aspartate(89)-[ribosomal protein uS12]-hydrogen + (sulfur carrier)-SH + AH2 + 2 S-adenosyl-L-methionine = 3-methylsulfanyl-L-aspartate(89)-[ribosomal protein uS12]-hydrogen + (sulfur carrier)-H + 5'-deoxyadenosine + L-methionine + A + S-adenosyl-L-homocysteine + 2 H(+). Catalyzes the methylthiolation of an aspartic acid residue of ribosomal protein uS12. The protein is Ribosomal protein uS12 methylthiotransferase RimO of Thermus thermophilus (strain ATCC BAA-163 / DSM 7039 / HB27).